A 360-amino-acid chain; its full sequence is Phospho-N-acetylmuramoyl-pentapeptide-transferase (360 aa).

The next 10 membrane-spanning stretches (helical) occupy residues 25-45 (RGIL…PWMI), 73-93 (TMGG…WADL), 97-117 (YVWT…VDDY), 132-152 (WKYF…YMTA), 167-187 (TIEI…IVGS), 199-219 (GLAI…CYLS), 236-256 (AGEL…FLWF), 263-283 (VFMG…IAVI), 288-308 (VVLF…MIQV), and 338-358 (VIVR…ATLK).

The protein belongs to the glycosyltransferase 4 family. MraY subfamily. The cofactor is Mg(2+).

The protein resides in the cell inner membrane. It catalyses the reaction UDP-N-acetyl-alpha-D-muramoyl-L-alanyl-gamma-D-glutamyl-meso-2,6-diaminopimeloyl-D-alanyl-D-alanine + di-trans,octa-cis-undecaprenyl phosphate = di-trans,octa-cis-undecaprenyl diphospho-N-acetyl-alpha-D-muramoyl-L-alanyl-D-glutamyl-meso-2,6-diaminopimeloyl-D-alanyl-D-alanine + UMP. It functions in the pathway cell wall biogenesis; peptidoglycan biosynthesis. Functionally, catalyzes the initial step of the lipid cycle reactions in the biosynthesis of the cell wall peptidoglycan: transfers peptidoglycan precursor phospho-MurNAc-pentapeptide from UDP-MurNAc-pentapeptide onto the lipid carrier undecaprenyl phosphate, yielding undecaprenyl-pyrophosphoryl-MurNAc-pentapeptide, known as lipid I. The polypeptide is Phospho-N-acetylmuramoyl-pentapeptide-transferase (Azotobacter vinelandii (strain DJ / ATCC BAA-1303)).